The primary structure comprises 578 residues: Isocitrate dehydrogenase kinase/phosphatase (578 aa).

ATP contacts are provided by residues 315–321 (APGIRGM) and lysine 336. The active site involves aspartate 371.

This sequence belongs to the AceK family.

The protein localises to the cytoplasm. The enzyme catalyses L-seryl-[isocitrate dehydrogenase] + ATP = O-phospho-L-seryl-[isocitrate dehydrogenase] + ADP + H(+). Functionally, bifunctional enzyme which can phosphorylate or dephosphorylate isocitrate dehydrogenase (IDH) on a specific serine residue. This is a regulatory mechanism which enables bacteria to bypass the Krebs cycle via the glyoxylate shunt in response to the source of carbon. When bacteria are grown on glucose, IDH is fully active and unphosphorylated, but when grown on acetate or ethanol, the activity of IDH declines drastically concomitant with its phosphorylation. The protein is Isocitrate dehydrogenase kinase/phosphatase of Shigella boydii serotype 18 (strain CDC 3083-94 / BS512).